The chain runs to 250 residues: Protein orai-2 (250 aa).

4 helical membrane-spanning segments follow: residues 66–83 (TSALLSGFAMVAMVEVQL), 94–114 (LIAFSACTTVLVAVHLFALLI), 148–168 (LAWGFSTVLGILLFLAEVVLL), and 192–212 (AALVSTIIMVPVGLIFVVFTI).

The protein belongs to the Orai family. In terms of assembly, oligomerizes in homomeric and heteromeric ORAI complexes. Native CRAC channels most likely consist of hexameric ORAI heteromers, implying that diverse ORAI1, ORAI2 and ORAI3 subunit combinations with distinct biophysical properties can operate in a cell-type specific way. Interacts with STIM1; this regulates channel activity. Interacts with CRACR2A/EFCAB4B.

Its subcellular location is the cell membrane. The enzyme catalyses Ca(2+)(in) = Ca(2+)(out). CRAC channels are regulated by fast Ca(2+)-dependent inactivation (FCDI), a mechanism that limits Ca(2+) influx and cell toxicity. ORAI2 channels display prominent FCDI. Inhibited by lanthanides such as Gd(3+) ions. Functionally, pore-forming subunit of inward rectifying Ca(2+) release-activated Ca(2+) (CRAC) channels. Assembles with ORAI1 and ORAI3 to form hexameric CRAC channels that mediate Ca(2+) influx upon depletion of endoplasmic reticulum Ca(2+) store and channel activation by Ca(2+) sensor STIM1, a process known as store-operated Ca(2+) entry (SOCE). Various pore subunit combinations may account for distinct CRAC channel spatiotemporal and cell-type specific dynamics. ORAI1 mainly contributes to the generation of Ca(2+) plateaus involved in sustained Ca(2+) entry and is dispensable for cytosolic Ca(2+) oscillations, whereas ORAI2 and ORAI3 generate oscillatory patterns. CRAC channels assemble in Ca(2+) signaling microdomains where Ca(2+) influx is coupled to calmodulin and calcineurin signaling and activation of NFAT transcription factors recruited to ORAI1 via AKAP5. CRAC channels are the main pathway for Ca(2+) influx in T cells and promote the immune response to pathogens by activating NFAT-dependent cytokine and chemokine transcription. The protein is Protein orai-2 (Orai2) of Mus musculus (Mouse).